Consider the following 306-residue polypeptide: 4-hydroxy-tetrahydrodipicolinate synthase (306 aa).

Pyruvate is bound at residue Thr-46. The Proton donor/acceptor role is filled by Tyr-134. Residue Lys-162 is the Schiff-base intermediate with substrate of the active site. Pyruvate is bound at residue Val-204.

Belongs to the DapA family. In terms of assembly, homotetramer; dimer of dimers.

The protein resides in the cytoplasm. The catalysed reaction is L-aspartate 4-semialdehyde + pyruvate = (2S,4S)-4-hydroxy-2,3,4,5-tetrahydrodipicolinate + H2O + H(+). Its pathway is amino-acid biosynthesis; L-lysine biosynthesis via DAP pathway; (S)-tetrahydrodipicolinate from L-aspartate: step 3/4. Its function is as follows. Catalyzes the condensation of (S)-aspartate-beta-semialdehyde [(S)-ASA] and pyruvate to 4-hydroxy-tetrahydrodipicolinate (HTPA). This is 4-hydroxy-tetrahydrodipicolinate synthase from Synechococcus sp. (strain JA-2-3B'a(2-13)) (Cyanobacteria bacterium Yellowstone B-Prime).